The chain runs to 1386 residues: Pleckstrin homology domain-containing family G member 2 (1386 aa).

2 disordered regions span residues methionine 1–arginine 21 and threonine 36–glycine 82. Composition is skewed to low complexity over residues leucine 8 to leucine 17 and serine 45 to glycine 62. At serine 90 the chain carries Phosphoserine. A DH domain is found at arginine 102–methionine 283. Residues glutamate 313 to phenylalanine 411 enclose the PH domain. Disordered stretches follow at residues lysine 436–threonine 540, glycine 554–leucine 612, glutamate 701–valine 739, isoleucine 790–serine 815, and glutamine 829–leucine 859. The residue at position 445 (threonine 445) is a Phosphothreonine. Phosphoserine is present on residues serine 450 and serine 469. Positions serine 592–glutamate 603 are enriched in acidic residues. Phosphoserine is present on residues serine 911 and serine 1049. Disordered stretches follow at residues proline 1037–cysteine 1099 and threonine 1162–valine 1191. 2 stretches are compositionally biased toward polar residues: residues glutamate 1048–glycine 1059 and glutamine 1073–aspartate 1086. A Phosphothreonine modification is found at threonine 1257. Phosphoserine is present on residues serine 1261 and serine 1310. Disordered regions lie at residues alanine 1291–leucine 1333 and threonine 1367–methionine 1386. Residues proline 1301–serine 1317 are compositionally biased toward low complexity. Positions serine 1318–alanine 1330 are enriched in pro residues.

Its function is as follows. May be a transforming oncogene with exchange activity for CDC42. May be a guanine-nucleotide exchange factor (GEF) for RAC1 and CDC42. Activated by the binding to subunits beta and gamma of the heterotrimeric guanine nucleotide-binding protein (G protein). Involved in the regulation of actin polymerization. The sequence is that of Pleckstrin homology domain-containing family G member 2 (PLEKHG2) from Homo sapiens (Human).